We begin with the raw amino-acid sequence, 112 residues long: UPF0342 protein SPP_1392 (112 aa).

The protein belongs to the UPF0342 family.

This Streptococcus pneumoniae (strain P1031) protein is UPF0342 protein SPP_1392.